Consider the following 758-residue polypeptide: Polyribonucleotide nucleotidyltransferase (758 aa).

Residues Asp488 and Asp494 each contribute to the Mg(2+) site. A KH domain is found at 555–614 (PKLYTMKINPEKIRDVIGKGGAVIRALTEETGTQINIDEDGTITIASTDSAKADEAKRRI). The region spanning 624–692 (GKIYEGPVVK…EKGRVKLSMR (69 aa)) is the S1 motif domain. Positions 692 to 758 (RALLDRPMGD…AGEHSGQMDA (67 aa)) are disordered. Basic and acidic residues predominate over residues 707–735 (PAERGERGDRGDRGDRPERGERRERREPA). Positions 736–745 (GADQQQQQQQ) are enriched in low complexity.

The protein belongs to the polyribonucleotide nucleotidyltransferase family. Mg(2+) is required as a cofactor.

It is found in the cytoplasm. It carries out the reaction RNA(n+1) + phosphate = RNA(n) + a ribonucleoside 5'-diphosphate. In terms of biological role, involved in mRNA degradation. Catalyzes the phosphorolysis of single-stranded polyribonucleotides processively in the 3'- to 5'-direction. The chain is Polyribonucleotide nucleotidyltransferase from Paracidovorax citrulli (strain AAC00-1) (Acidovorax citrulli).